Consider the following 248-residue polypeptide: 2,3-bisphosphoglycerate-dependent phosphoglycerate mutase (248 aa).

Residues 8-15, 21-22, R60, 87-90, K98, 114-115, and 183-184 each bind substrate; these read RHGESEWN, TG, ERHY, RR, and GN. The active-site Tele-phosphohistidine intermediate is H9. E87 (proton donor/acceptor) is an active-site residue.

The protein belongs to the phosphoglycerate mutase family. BPG-dependent PGAM subfamily.

The catalysed reaction is (2R)-2-phosphoglycerate = (2R)-3-phosphoglycerate. The protein operates within carbohydrate degradation; glycolysis; pyruvate from D-glyceraldehyde 3-phosphate: step 3/5. In terms of biological role, catalyzes the interconversion of 2-phosphoglycerate and 3-phosphoglycerate. This Borrelia turicatae (strain 91E135) protein is 2,3-bisphosphoglycerate-dependent phosphoglycerate mutase.